Here is a 450-residue protein sequence, read N- to C-terminus: MNNQVDPIWQSRFIADKPREKDHRPPFRRDRGRILHSAAFRCLQAKTQIHAVGENDFYRTRLTHSLEVAQIGSSLVAQMRFSEAFTALAQQMQQDKTELQKTLKGLLPSNDLIESLCFAHDIGHPPFGHGGEVALNYMMREHGGFEGNAQTFRLLTKLEPYTPNAGMNLTRRTLLGIVKYPTILDISSAQYAKLAPELNADSRYVKMNGWRPGKGLFRDDLPMFEWLLEPLSVKDRDLFGQFKQVRSDPSQILKTKFKSLDCSLMELADDIAYGVHDLEDAIVVGMVNLHQWQSALTALKNCPSEWIQKHIDAITEKLFSDQHYLRKNAIGALVNYFITSVRWTLTDDFNEPLLRYNAQLPAEVEAVLQIFKAFVRDHVILNVDTQRIEYKGQRILTEMFQIFESDPERLLPRNTAKRWQQASKESKKRVICDYMAGMSDAYALRVYQQL.

The region spanning 61–201 (RLTHSLEVAQ…AKLAPELNAD (141 aa)) is the HD domain.

This sequence belongs to the dGTPase family. Type 2 subfamily.

This Pasteurella multocida (strain Pm70) protein is Deoxyguanosinetriphosphate triphosphohydrolase-like protein.